The primary structure comprises 250 residues: MFASDVPRLTGWAPERWPVAADWRPVVDRFLTSETGRALERFVRARLAGGAVIYPQQPLRALALTPLAQVKVVILGQDPYHGPGQAEGLAFSVAPGVRPPPSLCNIFREIARDPLLSPGNLIPHGDGSLVAWARQGVLLLNSCLTVEEGQPASHAGRGWEALTDEVVKAVASIDNPVVFLLWGAHAQAKQRLIAATARQGGRAAADHLVLTANHPSPLSARRPPLPFLGCGHFGLANAYLLQHGCAPIAW.

The active-site Proton acceptor is aspartate 78.

Belongs to the uracil-DNA glycosylase (UDG) superfamily. UNG family.

Its subcellular location is the cytoplasm. It catalyses the reaction Hydrolyzes single-stranded DNA or mismatched double-stranded DNA and polynucleotides, releasing free uracil.. Its function is as follows. Excises uracil residues from the DNA which can arise as a result of misincorporation of dUMP residues by DNA polymerase or due to deamination of cytosine. This Albidiferax ferrireducens (strain ATCC BAA-621 / DSM 15236 / T118) (Rhodoferax ferrireducens) protein is Uracil-DNA glycosylase.